A 160-amino-acid chain; its full sequence is Eosinophil cationic protein (160 aa).

An N-terminal signal peptide occupies residues 1–27; the sequence is MVPKLFTSQICLLLLLGLMGVEGSLHA. The interval 28 to 72 is required for nearly all of the bactericidal activities; partially involved in LPS-binding; the sequence is RPPQFTRAQWFAIQHISLNPPRCTIAMRVINNYRWRCKNQNTFLR. H42 serves as the catalytic Proton acceptor. Cystine bridges form between C50-C110, C64-C123, C82-C138, and C89-C98. Y60 is modified (3'-nitrotyrosine). 65–69 lines the substrate pocket; the sequence is KNQNT. 3 N-linked (GlcNAc...) asparagine glycosylation sites follow: N84, N92, and N119. H155 acts as the Proton donor in catalysis.

Belongs to the pancreatic ribonuclease family. In terms of assembly, interacts with bacterial lipopolysaccharide (LPS) and lipoteichoic acid (LTA). In vitro interacts with phospholipid bilayers.

It is found in the secreted. Cytotoxin and helminthotoxin with low-efficiency ribonuclease activity. Possesses a wide variety of biological activities. Exhibits antibacterial activity. This is Eosinophil cationic protein (RNASE3) from Gorilla gorilla gorilla (Western lowland gorilla).